Consider the following 623-residue polypeptide: Sulfite reductase [NADPH] flavoprotein alpha-component (623 aa).

The tract at residues 1–32 (MSFQKNEYSHKNVSEDNNGQGGNPPIASPLND) is disordered. A Flavodoxin-like domain is found at 87–225 (LTIIFASQTG…AAEEWRKNAL (139 aa)). FMN-binding positions include 93-98 (SQTGNA), 140-143 (STNG), and 176-185 (LGDSSYEFFC). The FAD-binding FR-type domain occupies 258–472 (QNPYTATLLT…VEHNNNFKLP (215 aa)). FAD-binding positions include threonine 346, alanine 380, 410–413 (RLYS), 428–430 (TVG), tyrosine 434, and 443–446 (GGAS). Residues 543–544 (SR), 549–553 (KVYVQ), and aspartate 585 each bind NADP(+). Tyrosine 623 provides a ligand contact to FAD.

Belongs to the NADPH-dependent sulphite reductase flavoprotein subunit CysJ family. This sequence in the N-terminal section; belongs to the flavodoxin family. It in the C-terminal section; belongs to the flavoprotein pyridine nucleotide cytochrome reductase family. As to quaternary structure, alpha(8)-beta(8). The alpha component is a flavoprotein, the beta component is a hemoprotein. Requires FAD as cofactor. The cofactor is FMN.

It carries out the reaction hydrogen sulfide + 3 NADP(+) + 3 H2O = sulfite + 3 NADPH + 4 H(+). It participates in sulfur metabolism; hydrogen sulfide biosynthesis; hydrogen sulfide from sulfite (NADPH route): step 1/1. Functionally, component of the sulfite reductase complex that catalyzes the 6-electron reduction of sulfite to sulfide. This is one of several activities required for the biosynthesis of L-cysteine from sulfate. The flavoprotein component catalyzes the electron flow from NADPH -&gt; FAD -&gt; FMN to the hemoprotein component. In Vibrio parahaemolyticus serotype O3:K6 (strain RIMD 2210633), this protein is Sulfite reductase [NADPH] flavoprotein alpha-component.